Reading from the N-terminus, the 584-residue chain is 4-hydroxybenzoate decarboxylase subunit C (584 aa).

The protein belongs to the UbiD family. Component of the decarboxylase complex composed of the subunits B and C (Potential). The subunit D usually found in other organisms seems to be absent.

It catalyses the reaction 4-hydroxybenzoate + H(+) = phenol + CO2. The enzyme activity is enhanced by Mg(2+), Fe(2+), Mn(2+) and Ca(2+). No stimulation is observed with Cu(2+) and Zn(2+). Its function is as follows. Catalyzes the reversible decarboxylation of 4-hydroxybenzoate. This chain is 4-hydroxybenzoate decarboxylase subunit C, found in Chlamydia pneumoniae (Chlamydophila pneumoniae).